A 468-amino-acid polypeptide reads, in one-letter code: Protein CA_C1420 (468 aa).

A unknown region spans residues Met1–Asp289. The AMMECR1 domain occupies Gln296–Ser468.

This is Protein CA_C1420 from Clostridium acetobutylicum (strain ATCC 824 / DSM 792 / JCM 1419 / IAM 19013 / LMG 5710 / NBRC 13948 / NRRL B-527 / VKM B-1787 / 2291 / W).